The sequence spans 296 residues: MEDYIVRATAKEGTIRALAAITTNMVKEAQKVHGLSPLATVALGRTMTAAAMMSTTLKEENAVITLQIKGDGPIGGIVVVVDSSANVKGYVHNPLVYLPLNSQGKYDVAGAVGNGYLNVIKDLGLREPYVGHVDLVSGEIAEDITYYYAYSEQVPTATALGVLTNATEIVVSAGGFILQLMPGADDDTISFIENKISSIPPVSTLLAQNKSPEDILEMLLSEKDMKIIGKSPCRYLCNCSRERMERNIMTLGKEEIMGMINENHGAEAHCHFCNKKYWFSEEDLLRLVKIIESQKS.

2 disulfide bridges follow: C237-C239 and C270-C273.

Belongs to the HSP33 family. Under oxidizing conditions two disulfide bonds are formed involving the reactive cysteines. Under reducing conditions zinc is bound to the reactive cysteines and the protein is inactive.

Its subcellular location is the cytoplasm. Functionally, redox regulated molecular chaperone. Protects both thermally unfolding and oxidatively damaged proteins from irreversible aggregation. Plays an important role in the bacterial defense system toward oxidative stress. The protein is 33 kDa chaperonin of Acetivibrio thermocellus (strain ATCC 27405 / DSM 1237 / JCM 9322 / NBRC 103400 / NCIMB 10682 / NRRL B-4536 / VPI 7372) (Clostridium thermocellum).